The sequence spans 575 residues: Beta-amylase (575 aa).

A signal peptide spans 1 to 36; the sequence is MLHSQKRIWKKIGLCLLSFILGITVFTGSFGSKAEA. Aspartate 77 provides a ligand contact to substrate. Ca(2+) is bound by residues glutamate 84 and aspartate 88. Substrate is bound by residues histidine 117 and aspartate 125. Residues cysteine 119 and cysteine 127 are joined by a disulfide bond. Glutamate 171 is a Ca(2+) binding site. Catalysis depends on glutamate 199, which acts as the Proton donor. Substrate-binding residues include lysine 315, histidine 320, and threonine 358. Glutamate 395 acts as the Proton acceptor in catalysis. Substrate contacts are provided by residues 396–397 and arginine 424; that span reads NA.

It belongs to the glycosyl hydrolase 14 family. In terms of assembly, monomer. It depends on Ca(2+) as a cofactor.

It carries out the reaction Hydrolysis of (1-&gt;4)-alpha-D-glucosidic linkages in polysaccharides so as to remove successive maltose units from the non-reducing ends of the chains.. The chain is Beta-amylase from Niallia circulans (Bacillus circulans).